The following is a 127-amino-acid chain: UPF0102 protein Cpha266_0037 (127 aa).

This sequence belongs to the UPF0102 family.

The chain is UPF0102 protein Cpha266_0037 from Chlorobium phaeobacteroides (strain DSM 266 / SMG 266 / 2430).